Consider the following 230-residue polypeptide: Phosphatidylserine decarboxylase proenzyme (230 aa).

The active-site Schiff-base intermediate with substrate; via pyruvic acid is the serine 186. At serine 186 the chain carries Pyruvic acid (Ser); by autocatalysis.

Belongs to the phosphatidylserine decarboxylase family. PSD-A subfamily. Heterodimer of a large membrane-associated beta subunit and a small pyruvoyl-containing alpha subunit. Requires pyruvate as cofactor. Is synthesized initially as an inactive proenzyme. Formation of the active enzyme involves a self-maturation process in which the active site pyruvoyl group is generated from an internal serine residue via an autocatalytic post-translational modification. Two non-identical subunits are generated from the proenzyme in this reaction, and the pyruvate is formed at the N-terminus of the alpha chain, which is derived from the carboxyl end of the proenzyme. The post-translation cleavage follows an unusual pathway, termed non-hydrolytic serinolysis, in which the side chain hydroxyl group of the serine supplies its oxygen atom to form the C-terminus of the beta chain, while the remainder of the serine residue undergoes an oxidative deamination to produce ammonia and the pyruvoyl prosthetic group on the alpha chain.

Its subcellular location is the cell membrane. The catalysed reaction is a 1,2-diacyl-sn-glycero-3-phospho-L-serine + H(+) = a 1,2-diacyl-sn-glycero-3-phosphoethanolamine + CO2. The protein operates within phospholipid metabolism; phosphatidylethanolamine biosynthesis; phosphatidylethanolamine from CDP-diacylglycerol: step 2/2. In terms of biological role, catalyzes the formation of phosphatidylethanolamine (PtdEtn) from phosphatidylserine (PtdSer). The sequence is that of Phosphatidylserine decarboxylase proenzyme from Wolbachia sp. subsp. Brugia malayi (strain TRS).